Reading from the N-terminus, the 103-residue chain is Co-chaperonin GroES (103 aa).

This sequence belongs to the GroES chaperonin family. As to quaternary structure, heptamer of 7 subunits arranged in a ring. Interacts with the chaperonin GroEL.

It is found in the cytoplasm. Its function is as follows. Together with the chaperonin GroEL, plays an essential role in assisting protein folding. The GroEL-GroES system forms a nano-cage that allows encapsulation of the non-native substrate proteins and provides a physical environment optimized to promote and accelerate protein folding. GroES binds to the apical surface of the GroEL ring, thereby capping the opening of the GroEL channel. The polypeptide is Co-chaperonin GroES (Synechococcus elongatus (strain ATCC 33912 / PCC 7942 / FACHB-805) (Anacystis nidulans R2)).